Consider the following 206-residue polypeptide: Max dimerization protein 3 (206 aa).

The tract at residues 8-25 (IQVLLQAAEFLERREREA) is interaction with SIN3A and SIN3B. 2 disordered regions span residues 25 to 67 (AEHG…ELEK) and 146 to 171 (RERLRADSLDSSGLSSERSDSDQEEL). The bHLH domain occupies 57 to 109 (SGRSVHNELEKRRRAQLKRCLERLKQQMPLGADCARYTTLSLLRRARMHIQKL).

As to quaternary structure, efficient DNA binding requires dimerization with another bHLH protein. Binds DNA as a heterodimer with MAX. Interacts with SIN3A AND SIN3B. Interacts with RNF17.

The protein resides in the nucleus. Transcriptional repressor. Binds with MAX to form a sequence-specific DNA-binding protein complex which recognizes the core sequence 5'-CAC[GA]TG-3'. Antagonizes MYC transcriptional activity by competing for MAX and suppresses MYC dependent cell transformation. In Homo sapiens (Human), this protein is Max dimerization protein 3 (MXD3).